A 439-amino-acid chain; its full sequence is 3-phosphoshikimate 1-carboxyvinyltransferase (439 aa).

Residues Lys27, Ser28, and Arg32 each coordinate 3-phosphoshikimate. Residue Lys27 participates in phosphoenolpyruvate binding. Phosphoenolpyruvate contacts are provided by Gly101 and Arg130. 4 residues coordinate 3-phosphoshikimate: Ser175, Gln177, Asp326, and Lys353. Residue Gln177 coordinates phosphoenolpyruvate. The active-site Proton acceptor is the Asp326. 2 residues coordinate phosphoenolpyruvate: Arg357 and Arg399.

It belongs to the EPSP synthase family. As to quaternary structure, monomer.

The protein localises to the cytoplasm. The catalysed reaction is 3-phosphoshikimate + phosphoenolpyruvate = 5-O-(1-carboxyvinyl)-3-phosphoshikimate + phosphate. The protein operates within metabolic intermediate biosynthesis; chorismate biosynthesis; chorismate from D-erythrose 4-phosphate and phosphoenolpyruvate: step 6/7. Functionally, catalyzes the transfer of the enolpyruvyl moiety of phosphoenolpyruvate (PEP) to the 5-hydroxyl of shikimate-3-phosphate (S3P) to produce enolpyruvyl shikimate-3-phosphate and inorganic phosphate. In Synechococcus sp. (strain CC9311), this protein is 3-phosphoshikimate 1-carboxyvinyltransferase.